The primary structure comprises 88 residues: Small ribosomal subunit protein uS17 (88 aa).

This sequence belongs to the universal ribosomal protein uS17 family. In terms of assembly, part of the 30S ribosomal subunit.

Functionally, one of the primary rRNA binding proteins, it binds specifically to the 5'-end of 16S ribosomal RNA. The protein is Small ribosomal subunit protein uS17 of Helicobacter hepaticus (strain ATCC 51449 / 3B1).